The chain runs to 289 residues: Bifunctional protein FolD (289 aa).

NADP(+)-binding positions include 166 to 168 (GRS), Ser191, and Ile232.

This sequence belongs to the tetrahydrofolate dehydrogenase/cyclohydrolase family. Homodimer.

The enzyme catalyses (6R)-5,10-methylene-5,6,7,8-tetrahydrofolate + NADP(+) = (6R)-5,10-methenyltetrahydrofolate + NADPH. It carries out the reaction (6R)-5,10-methenyltetrahydrofolate + H2O = (6R)-10-formyltetrahydrofolate + H(+). The protein operates within one-carbon metabolism; tetrahydrofolate interconversion. In terms of biological role, catalyzes the oxidation of 5,10-methylenetetrahydrofolate to 5,10-methenyltetrahydrofolate and then the hydrolysis of 5,10-methenyltetrahydrofolate to 10-formyltetrahydrofolate. The protein is Bifunctional protein FolD of Synechococcus elongatus (strain ATCC 33912 / PCC 7942 / FACHB-805) (Anacystis nidulans R2).